Here is a 286-residue protein sequence, read N- to C-terminus: Interferon-induced 35 kDa protein (286 aa).

Residues 5–26 form a leucine-zipper region; that stretch reads LDAALHALQEEQARLKMRLWDL. NID domains are found at residues 81-170 and 183-266; these read ALIT…GDVD and FARD…GEVE.

It belongs to the NMI family. As to quaternary structure, homodimer. Also interacts with BATF. Interacts with TRIM21. Interacts with NMI; the interaction is direct and is facilitated by TRIM21. Phosphorylated. Dephosphorylation correlates with the formation of a complex with NMI. As to expression, expressed in a wide range of cell types, including fibroblasts, macrophages, and epithelial cells.

It localises to the cytoplasm. The protein resides in the nucleus. Its subcellular location is the secreted. Acts as a signaling pathway regulator involved in innate immune system response. In response to interferon IFN-alpha, associates in a complex with signaling pathway regulator NMI to regulate immune response; the complex formation prevents proteasome-mediated degradation of IFI35 and correlates with IFI35 dephosphorylation. In complex with NMI, inhibits virus-triggered type I interferon/IFN-beta production. In complex with NMI, negatively regulates nuclear factor NF-kappa-B signaling by inhibiting the nuclear translocation, activation and transcription of the NF-kappa-B subunit p65/RELA, resulting in the inhibition of endothelial cell proliferation, migration and re-endothelialization of injured arteries. Beside its role as an intracellular signaling pathway regulator, also functions extracellularly as damage-associated molecular patterns (DAMPs) to promote inflammation when actively released by macrophage to the extracellular space during cell injury and pathogen invasion. Macrophage-secreted IFI35 activates NF-kappa-B signaling in adjacent macrophages through Toll-like receptor 4/TLR4 activation, thereby inducing NF-kappa-B translocation from the cytoplasm into the nucleus which promotes the release of pro-inflammatory cytokines. The protein is Interferon-induced 35 kDa protein of Homo sapiens (Human).